The primary structure comprises 255 residues: uncharacterized protein (255 aa).

The N-terminal stretch at M1 to G23 is a signal peptide. C24 carries the N-palmitoyl cysteine lipid modification. C24 carries S-diacylglycerol cysteine lipidation.

Belongs to the staphylococcal tandem lipoprotein family.

It localises to the cell membrane. This is an uncharacterized protein from Staphylococcus aureus (strain USA300).